Reading from the N-terminus, the 603-residue chain is Putative ankyrin repeat protein FPV162 (603 aa).

ANK repeat units follow at residues 23-53, 57-87, 91-120, 124-155, 159-189, 193-223, 227-257, 261-291, 295-325, 329-362, 366-397, 401-428, 432-467, and 504-533; these read FKDT…DINV, FKKT…NVNV, FEST…DPNT, NGQT…NVNA, KHNT…DVKI, DGIT…DVNA, EGNT…EVNA, VGDT…NVNA, ISVT…EVNS, YGRT…DIEA, IGGT…DINT, RDET…STNI, SNIT…DIKN, and NNMY…DIYL.

This is Putative ankyrin repeat protein FPV162 from Vertebrata (FPV).